The following is a 154-amino-acid chain: uncharacterized protein (154 aa).

Its function is as follows. This protein may be involved in virus assembly. Essential for virus function. This is an uncharacterized protein from Saccharolobus solfataricus (Sulfolobus solfataricus).